Reading from the N-terminus, the 306-residue chain is Putative type I specificity subunit S.MpnORF285P (306 aa).

The protein belongs to the type-I restriction system S methylase family. In terms of assembly, the methyltransferase is composed of M and S polypeptides.

Functionally, the specificity (S) subunit of a type I methyltransferase (MTase); this subunit dictates DNA sequence specificity. The single R subunit has multiple frameshifts and is probably not expressed. This Mycoplasma pneumoniae (strain ATCC 29342 / M129 / Subtype 1) (Mycoplasmoides pneumoniae) protein is Putative type I specificity subunit S.MpnORF285P.